We begin with the raw amino-acid sequence, 223 residues long: Thiamine-phosphate synthase (223 aa).

4-amino-2-methyl-5-(diphosphooxymethyl)pyrimidine-binding positions include 45–49 (QYREK) and Asn77. Mg(2+) contacts are provided by Asp78 and Asp97. 4-amino-2-methyl-5-(diphosphooxymethyl)pyrimidine is bound at residue Thr116. 142-144 (SYT) contacts 2-[(2R,5Z)-2-carboxy-4-methylthiazol-5(2H)-ylidene]ethyl phosphate. Lys145 provides a ligand contact to 4-amino-2-methyl-5-(diphosphooxymethyl)pyrimidine. Residues Gly173 and 193 to 194 (VT) each bind 2-[(2R,5Z)-2-carboxy-4-methylthiazol-5(2H)-ylidene]ethyl phosphate.

It belongs to the thiamine-phosphate synthase family. Mg(2+) serves as cofactor.

The catalysed reaction is 2-[(2R,5Z)-2-carboxy-4-methylthiazol-5(2H)-ylidene]ethyl phosphate + 4-amino-2-methyl-5-(diphosphooxymethyl)pyrimidine + 2 H(+) = thiamine phosphate + CO2 + diphosphate. It carries out the reaction 2-(2-carboxy-4-methylthiazol-5-yl)ethyl phosphate + 4-amino-2-methyl-5-(diphosphooxymethyl)pyrimidine + 2 H(+) = thiamine phosphate + CO2 + diphosphate. It catalyses the reaction 4-methyl-5-(2-phosphooxyethyl)-thiazole + 4-amino-2-methyl-5-(diphosphooxymethyl)pyrimidine + H(+) = thiamine phosphate + diphosphate. It functions in the pathway cofactor biosynthesis; thiamine diphosphate biosynthesis; thiamine phosphate from 4-amino-2-methyl-5-diphosphomethylpyrimidine and 4-methyl-5-(2-phosphoethyl)-thiazole: step 1/1. Its function is as follows. Condenses 4-methyl-5-(beta-hydroxyethyl)thiazole monophosphate (THZ-P) and 2-methyl-4-amino-5-hydroxymethyl pyrimidine pyrophosphate (HMP-PP) to form thiamine monophosphate (TMP). The chain is Thiamine-phosphate synthase from Dictyoglomus turgidum (strain DSM 6724 / Z-1310).